The sequence spans 295 residues: MLFGMARIAIIGGGSIGEALLSGLLRAGRQVKDLVVAERMPDRANYLAQTYSVLVTSAADAVENATFVVVAVKPADVEPVIADLANATAAAENDSAEQVFVTVVAGITIAYFESKLPAGTPVVRAMPNAAALVGAGVTALAKGRFVTPQQLEEVSALFDAVGGVLTVPESQLDAVTAVSGSGPAYFFLLVEALVDAGVGVGLSRQVATDLAAQTMAGSAAMLLERMEQDQGGANGELMGLRVDLTASRLRAAVTSPGGTTAAALRELERGGFRMAVDAAVQAAKSRSEQLRITPE.

It belongs to the pyrroline-5-carboxylate reductase family.

It localises to the cytoplasm. The enzyme catalyses L-proline + NADP(+) = (S)-1-pyrroline-5-carboxylate + NADPH + 2 H(+). The catalysed reaction is L-proline + NAD(+) = (S)-1-pyrroline-5-carboxylate + NADH + 2 H(+). It participates in amino-acid biosynthesis; L-proline biosynthesis; L-proline from L-glutamate 5-semialdehyde: step 1/1. Functionally, catalyzes the reduction of 1-pyrroline-5-carboxylate (PCA) to L-proline. This is Pyrroline-5-carboxylate reductase from Mycobacterium tuberculosis (strain CDC 1551 / Oshkosh).